We begin with the raw amino-acid sequence, 1907 residues long: MHGSVSGYLLVNAEVDSMGGVIDSGGGIGVKTSPRRTAIEKAQAELRQEYDVREERRRELEFLEKGGNPLDFKFGIATSHSVQSTSLTDQQAEHFVNSEVKDSFALTASPHGDSVESSGRPGVPTISEPNTADNLLLFDSENKSVEGERNLRHPNRQNRTSESERSSKAHTNQNTKETEDSAIFRPYARRNRSKISRDPARSSSTDLVQNRGGLATSISIRRGSVEGKGCIPEAANQKDMHTTSVSCPVFANSNGNIVPKNRVSSNSLNTKVDGEPVVRESTAGSKTSLLKDEADISYSKSSAYLPVGESGLAGEKAQLVSTGGSPKAATIAGQKNSSTQLNGLRDSTVEEESLTNRGATGTNGLESESSHANNVEVNVDNERDLYKVDKLDSDEISMQKTLRVEGLLDQTVGEMTKTKIEDETGQSTTIISECIPECEMQMKSVKIENQSHRSTAEMQTKEKSSETEKRLQDGLVVLENDSKVGSILSENPSSTLCSGIPQASVDTSSCTVGNSLLSGTDIEALKHQPSSDAVMLDTVKEDAILEEARIIQAKKKRIAELSCGTAPVEVREKSQWDFVLEEMAWLANDFAQERLWKMTAATQICHRVALTCQLRFEERNQHRKLKKIASVLSYAILQFWSSVEAEVPGELEETSLGIVKETCQESNCLNGIRCLAAGVKEYASRFLKYNNSSISYHSAALSTPDNMCDPEILDISMVDQLTEASLFYSVPSGAMEVYLKSIESHLTRCEKSGSSMQEEVDTSAYDTAGDIGYNVTAFDEDEGETSTYYLPGAFESSRSFNISHKKRKNLMKSHSARSYDLGDDLPYVNNTGGSNSSSLIVKRPDSNINAGSVPTRRVRTASRHRVVSPFGCATTGNLPVPSKTDASSGDTSSFQDEYSSLHGGSAVQKGTEVESSVNFEKLLPYDMAETSGKPKKKKKTHQGSAYDQTWHLNPSVHVEQKDHWKKRPENNFDMNGLYGPHSAKKQKTTKQLVENNFDMAIPHTGSIPSPAASQMSNMSNPNKSIKFIGGRDRGRKIKGLKISPGQHGSGNPWSLFEDQALVVLVHDMGPNWELISDAMNSTLKIKYIYRNPTECKDRHKILMDKTAGDGADSAEDSGNSQSYPSTLPGIPKGSARQLFQRLQGPMEEDTLKSHFEKICLIGKKLHYRKTQNDGRDPKQIVPVHNSQVMALSQVFPNNLNGGVLTPLDVCDASTSGQDVFSLENPGLPMLNQGTPVLPTSGAHPSTPGSSGVVLSNNLPTTSGLQSASVRDGRFNVPRGSLPLDEQHRLQQFNQTLSGRNLQQPSLSTPAAVSGSDRGHRMVPGGNAMGVSGMNRNTPMSRPGFQGMASAAMPNTGNMHTSGMVGIPNTGNIHSGGGASQGNSMIRPREAVQHMMRMQAAQGNSPGIPAFSNLSSGFTNQTTPVQAYPGHLSQQHQMSPQSHVLGNSHHPHLQSPSQATGAQQEAFAIRQRQIHQRYLQQQQQQFPASGSMMPHVQQPQGSSVSSSSQNSPQTQPPVSPQPLSMPPVSPSPNINAMAQQKPQKSQLALHGLGRSPQSGTSGVNNQAGKQRQRQLQQSARQHPHQRQPTQGQQLNKQLKGMGRGNMIHQNITVDQSHLNGLTMPQGNQATEKGEIAVSVRPDQQSSVGTTTSTDLQSKPFVSPLSSNHSQQLPKSFPGALSPSPQQQMQLHSDNSIQGQSSPATPCNILSTSSLSIAPAVAPSNHQHLLIHQKQRNQVQSTAQRVVQHNHLGNSELSKKSQAECMPRVPQSVTNTTQTASMGTTKGMPQASNDLKNIKAVGSTAVPALEPPSCVASVQSTASKVVNNSNTDSAGNDPVSTPNQGLAQKHGIKGVTQRQQQSLPSEEKRPKLPEKPTVQNQKHLASEEQPHLEEAQELSSSKPPDTKVE.

Disordered stretches follow at residues 108-208 (ASPH…TDLV), 261-287 (NRVS…GSKT), 323-373 (GGSP…SHAN), and 449-469 (NQSH…ETEK). A compositionally biased stretch (basic and acidic residues) spans 140–151 (SENKSVEGERNL). Composition is skewed to polar residues over residues 261–270 (NRVSSNSLNT), 333–342 (GQKNSSTQLN), and 355–372 (TNRG…SSHA). The 79-residue stretch at 563 to 641 (CGTAPVEVRE…LSYAILQFWS (79 aa)) folds into the HSA domain. Disordered stretches follow at residues 836-909 (SSSL…AVQK) and 928-952 (AETS…TWHL). A compositionally biased stretch (basic residues) spans 856–866 (RRVRTASRHRV). Composition is skewed to polar residues over residues 884 to 898 (TDAS…QDEY) and 942 to 952 (QGSAYDQTWHL). An SANT domain is found at 1049 to 1105 (SGNPWSLFEDQALVVLVHDMGPNWELISDAMNSTLKIKYIYRNPTECKDRHKILMDK). Disordered regions lie at residues 1107-1131 (AGDG…PGIP), 1235-1266 (PVLP…GLQS), 1296-1319 (LSGR…DRGH), 1429-1465 (GHLS…QQEA), 1477-1594 (YLQQ…QQLN), 1638-1703 (VRPD…SPAT), 1767-1791 (VPQS…QASN), and 1824-1907 (VNNS…TKVE). Composition is skewed to polar residues over residues 1116–1125 (DSGNSQSYPS), 1242–1266 (AHPS…GLQS), 1296–1310 (LSGR…STPA), 1431–1444 (LSQQ…SHVL), and 1453–1462 (QSPSQATGAQ). A compositionally biased stretch (low complexity) spans 1493–1512 (PHVQQPQGSSVSSSSQNSPQ). Residues 1513–1529 (TQPPVSPQPLSMPPVSP) are compositionally biased toward pro residues. Composition is skewed to polar residues over residues 1532 to 1545 (NINA…QKSQ), 1554 to 1568 (SPQS…QAGK), 1585 to 1594 (RQPTQGQQLN), 1640 to 1655 (PDQQ…TDLQ), 1662 to 1672 (PLSSNHSQQLP), 1681 to 1703 (PSPQ…SPAT), 1769 to 1782 (QSVT…SMGT), and 1824 to 1844 (VNNS…NQGL). Composition is skewed to basic and acidic residues over residues 1863–1872 (SEEKRPKLPE) and 1882–1892 (LASEEQPHLEE).

The protein belongs to the EAF1 family. Component of the NuA4 histone acetyltransferase complex. Interacts with ARP4 and SWC4, and (via HSA domain) with TAF14 and TAF14B. In terms of tissue distribution, expressed in leaves.

The protein localises to the nucleus. In terms of biological role, component of the NuA4 histone acetyltransferase complex which is involved in transcriptional activation of selected genes principally by acetylation of nucleosomal histone H4 and H2A. This is Chromatin modification-related protein EAF1 B (EAF1B) from Arabidopsis thaliana (Mouse-ear cress).